An 800-amino-acid polypeptide reads, in one-letter code: Phosphate transporter PHO1 homolog 9 (800 aa).

The 346-residue stretch at 1 to 346 (MKFGREFETQ…SRNASKPYLN (346 aa)) folds into the SPX domain. The Cytoplasmic segment spans residues 1 to 398 (MKFGREFETQ…KTKREKHRIT (398 aa)). 3 disordered regions span residues 38–77 (QKQQ…PGLS), 91–119 (NRAS…HNHH), and 212–234 (PDLN…PAPS). Positions 42–51 (RPPPPPPPPS) are enriched in pro residues. Over residues 63-75 (GEGGGGGGGGGPG) the composition is skewed to gly residues. Positions 95–119 (RSPKKSHKHHNPLSSKRHHHHHNHH) are enriched in basic residues. Residues 216–229 (SVASAPSSPHSTMR) are compositionally biased toward polar residues. The helical transmembrane segment at 399-419 (YFLGFFSGCAVALAIAITVLV) threads the bilayer. At 420 to 439 (HIRGLTKSEGRHQYMENIFP) the chain is on the extracellular side. The helical transmembrane segment at 440–460 (LYSLFGFVAVHLFMYAADIYF) threads the bilayer. Residues 461 to 483 (WSRYRVNYPFIFGFEQGNDLGYR) lie on the Cytoplasmic side of the membrane. Residues 484 to 504 (EVLLVGSGLAVLTFGGVISNL) traverse the membrane as a helical segment. The Extracellular portion of the chain corresponds to 505-520 (DMEMDPRTKSFSVITE). The helical transmembrane segment at 521-541 (LVPLALLVCLMMVLFCPFNII) threads the bilayer. Residues 542–670 (YRSSRYFFVG…IFEMKRGTYW (129 aa)) lie on the Cytoplasmic side of the membrane. The 195-residue stretch at 606–800 (YDSEIYKELY…FQELGGSKSV (195 aa)) folds into the EXS domain. The chain crosses the membrane as a helical span at residues 671 to 691 (LTVAVTTSSIATLFNTYWDIF). Over 692 to 718 (RDWGLMNRNSKNPWLRDKLLVPYKSIY) the chain is Extracellular. The helical transmembrane segment at 719–739 (FIVMVANVVLRLAWMQTVLGI) threads the bilayer. At 740-800 (KEAPFLHKRA…FQELGGSKSV (61 aa)) the chain is on the cytoplasmic side.

Belongs to the SYG1 (TC 2.A.94) family. Specifically expressed in pollen grains.

It is found in the cell membrane. In terms of biological role, may transport inorganic phosphate (Pi). In Arabidopsis thaliana (Mouse-ear cress), this protein is Phosphate transporter PHO1 homolog 9 (PHO1-H9).